Consider the following 238-residue polypeptide: Ribitol-5-phosphate cytidylyltransferase 2 (238 aa).

Residues 7–10 (LAGG) and 81–87 (GTDRNET) contribute to the CTP site.

It belongs to the IspD/TarI cytidylyltransferase family. TarI subfamily.

The enzyme catalyses D-ribitol 5-phosphate + CTP + H(+) = CDP-L-ribitol + diphosphate. Its pathway is cell wall biogenesis; poly(ribitol phosphate) teichoic acid biosynthesis. In terms of biological role, catalyzes the transfer of the cytidylyl group of CTP to D-ribitol 5-phosphate. In Staphylococcus aureus (strain bovine RF122 / ET3-1), this protein is Ribitol-5-phosphate cytidylyltransferase 2.